A 241-amino-acid chain; its full sequence is Glucosamine-6-phosphate deaminase (241 aa).

Residue aspartate 67 is the Proton acceptor; for enolization step of the active site. Asparagine 136 serves as the catalytic For ring-opening step. The active-site Proton acceptor; for ring-opening step is histidine 138. Glutamate 143 serves as the catalytic For ring-opening step.

The protein belongs to the glucosamine/galactosamine-6-phosphate isomerase family. NagB subfamily.

The enzyme catalyses alpha-D-glucosamine 6-phosphate + H2O = beta-D-fructose 6-phosphate + NH4(+). It functions in the pathway amino-sugar metabolism; N-acetylneuraminate degradation; D-fructose 6-phosphate from N-acetylneuraminate: step 5/5. Functionally, catalyzes the reversible isomerization-deamination of glucosamine 6-phosphate (GlcN6P) to form fructose 6-phosphate (Fru6P) and ammonium ion. This is Glucosamine-6-phosphate deaminase from Bacillus pumilus (strain SAFR-032).